A 305-amino-acid polypeptide reads, in one-letter code: Serine/threonine-protein phosphatase 6 catalytic subunit (305 aa).

Mn(2+) is bound by residues Asp54, His56, Asp82, and Asn114. The active-site Proton donor is His115. Residues His164 and His238 each contribute to the Mn(2+) site.

It belongs to the PPP phosphatase family. PP-6 (PP-V) subfamily. Requires Mn(2+) as cofactor.

The enzyme catalyses O-phospho-L-seryl-[protein] + H2O = L-seryl-[protein] + phosphate. The catalysed reaction is O-phospho-L-threonyl-[protein] + H2O = L-threonyl-[protein] + phosphate. In Dictyostelium discoideum (Social amoeba), this protein is Serine/threonine-protein phosphatase 6 catalytic subunit (ppp6c).